Consider the following 191-residue polypeptide: Elongation factor P (191 aa).

Position 34 is an N6-(3,6-diaminohexanoyl)-5-hydroxylysine (lysine 34).

It belongs to the elongation factor P family. May be beta-lysylated on the epsilon-amino group of Lys-34 by the combined action of EpmA and EpmB, and then hydroxylated on the C5 position of the same residue by EpmC (if this protein is present). Lysylation is critical for the stimulatory effect of EF-P on peptide-bond formation. The lysylation moiety may extend toward the peptidyltransferase center and stabilize the terminal 3-CCA end of the tRNA. Hydroxylation of the C5 position on Lys-34 may allow additional potential stabilizing hydrogen-bond interactions with the P-tRNA.

The protein localises to the cytoplasm. It functions in the pathway protein biosynthesis; polypeptide chain elongation. Involved in peptide bond synthesis. Alleviates ribosome stalling that occurs when 3 or more consecutive Pro residues or the sequence PPG is present in a protein, possibly by augmenting the peptidyl transferase activity of the ribosome. Modification of Lys-34 is required for alleviation. The chain is Elongation factor P from Marinomonas sp. (strain MWYL1).